The following is an 864-amino-acid chain: Leucine--tRNA ligase (864 aa).

A 'HIGH' region motif is present at residues 47 to 57; the sequence is PYPSGNLHMGH. A disordered region spans residues 298–317; sequence SEQDRVADDRPKRGVATGGT. Positions 299-309 are enriched in basic and acidic residues; sequence EQDRVADDRPK. Residues 622 to 626 carry the 'KMSKS' region motif; that stretch reads KMSKS. Lys-625 is an ATP binding site.

Belongs to the class-I aminoacyl-tRNA synthetase family.

It is found in the cytoplasm. The enzyme catalyses tRNA(Leu) + L-leucine + ATP = L-leucyl-tRNA(Leu) + AMP + diphosphate. This chain is Leucine--tRNA ligase, found in Synechococcus sp. (strain RCC307).